The primary structure comprises 239 residues: Uridylate kinase (239 aa).

ATP is bound at residue 12–15 (KLSG). An involved in allosteric activation by GTP region spans residues 20–25 (GDQGAG). Residue Gly-54 coordinates UMP. 2 residues coordinate ATP: Gly-55 and Arg-59. UMP is bound by residues Asp-74 and 135 to 142 (TGNPFFTT). Residues Thr-162, Tyr-168, and Asp-171 each coordinate ATP.

This sequence belongs to the UMP kinase family. In terms of assembly, homohexamer.

The protein localises to the cytoplasm. The enzyme catalyses UMP + ATP = UDP + ADP. Its pathway is pyrimidine metabolism; CTP biosynthesis via de novo pathway; UDP from UMP (UMPK route): step 1/1. Allosterically activated by GTP. Inhibited by UTP. Its function is as follows. Catalyzes the reversible phosphorylation of UMP to UDP. The chain is Uridylate kinase from Methylococcus capsulatus (strain ATCC 33009 / NCIMB 11132 / Bath).